A 539-amino-acid polypeptide reads, in one-letter code: CTP synthase (539 aa).

Residues 1–267 (MTKYIFVTGG…DQKVCDFLHI (267 aa)) form an amidoligase domain region. A CTP-binding site is contributed by Ser13. Residue Ser13 coordinates UTP. An ATP-binding site is contributed by 14–19 (SLGKGI). Residue Tyr54 coordinates L-glutamine. ATP is bound at residue Asp71. Mg(2+) contacts are provided by Asp71 and Glu141. CTP-binding positions include 148-150 (DME), 188-193 (KTKPTQ), and Lys224. UTP-binding positions include 188–193 (KTKPTQ) and Lys224. The 244-residue stretch at 294 to 537 (KITLVGKYVE…IGAASGLPEQ (244 aa)) folds into the Glutamine amidotransferase type-1 domain. Residue Gly356 participates in L-glutamine binding. The active-site Nucleophile; for glutamine hydrolysis is Cys383. Residues 384 to 387 (LGMQ), Glu407, and Arg465 contribute to the L-glutamine site. Active-site residues include His510 and Glu512.

The protein belongs to the CTP synthase family. In terms of assembly, homotetramer.

The catalysed reaction is UTP + L-glutamine + ATP + H2O = CTP + L-glutamate + ADP + phosphate + 2 H(+). It carries out the reaction L-glutamine + H2O = L-glutamate + NH4(+). The enzyme catalyses UTP + NH4(+) + ATP = CTP + ADP + phosphate + 2 H(+). It participates in pyrimidine metabolism; CTP biosynthesis via de novo pathway; CTP from UDP: step 2/2. Allosterically activated by GTP, when glutamine is the substrate; GTP has no effect on the reaction when ammonia is the substrate. The allosteric effector GTP functions by stabilizing the protein conformation that binds the tetrahedral intermediate(s) formed during glutamine hydrolysis. Inhibited by the product CTP, via allosteric rather than competitive inhibition. Functionally, catalyzes the ATP-dependent amination of UTP to CTP with either L-glutamine or ammonia as the source of nitrogen. Regulates intracellular CTP levels through interactions with the four ribonucleotide triphosphates. This chain is CTP synthase, found in Lactobacillus helveticus (strain DPC 4571).